We begin with the raw amino-acid sequence, 385 residues long: Probable protein phosphatase 2C 38 (385 aa).

A PPM-type phosphatase domain is found at 46–357; sequence VAGEFSMSVI…DDITVIVVFL (312 aa). Position 77 is a phosphoserine (Ser-77). Mn(2+) is bound by residues Asp-88, Gly-89, Asp-289, and Asp-348.

This sequence belongs to the PP2C family. As to quaternary structure, interacts with BIK1. The cofactor is Mg(2+). Mn(2+) is required as a cofactor. Post-translationally, phosphorylation at Ser-77 induces dissociation of PP2C38 from BIK1.

The protein localises to the cell membrane. It carries out the reaction O-phospho-L-seryl-[protein] + H2O = L-seryl-[protein] + phosphate. The catalysed reaction is O-phospho-L-threonyl-[protein] + H2O = L-threonyl-[protein] + phosphate. Functionally, may dephosphorylate and repress plasma membrane H(+)-ATPases (PM H(+)-ATPases, e.g. AHA1 and AHA2), thus influencing negatively plant growth and fitness. Involved in pathogen-associated molecular pattern (PAMP)-triggered immunity (PTI) signaling. Negatively regulates immune responses by controlling the phosphorylation and activation status of BIK1, a central rate-limiting kinase in PTI signaling. Impairs the phosphorylation of the NADPH oxidase RBOHD by BIK1. The chain is Probable protein phosphatase 2C 38 from Arabidopsis thaliana (Mouse-ear cress).